Here is a 150-residue protein sequence, read N- to C-terminus: Mediator of RNA polymerase II transcription subunit 22a (150 aa).

Residues 99 to 127 (SLNDHVEQRIAEFDQEAEKTNRLLARIAD) adopt a coiled-coil conformation.

Belongs to the Mediator complex subunit 22 family. In terms of assembly, component of the Mediator complex.

It localises to the nucleus. Functionally, component of the Mediator complex, a coactivator involved in the regulated transcription of nearly all RNA polymerase II-dependent genes. Mediator functions as a bridge to convey information from gene-specific regulatory proteins to the basal RNA polymerase II transcription machinery. The Mediator complex, having a compact conformation in its free form, is recruited to promoters by direct interactions with regulatory proteins and serves for the assembly of a functional preinitiation complex with RNA polymerase II and the general transcription factors. This chain is Mediator of RNA polymerase II transcription subunit 22a (MED22A), found in Arabidopsis thaliana (Mouse-ear cress).